The chain runs to 122 residues: uncharacterized protein (122 aa).

The N-terminal stretch at 1 to 28 is a signal peptide; the sequence is MVPGPPESVVRFFLWFCFLLPPTRKASC. A glycan (N-linked (GlcNAc...) asparagine) is linked at Asn-49.

Its subcellular location is the secreted. This is an uncharacterized protein from Homo sapiens (Human).